A 123-amino-acid chain; its full sequence is Ribosome-binding factor A (123 aa).

Belongs to the RbfA family. Monomer. Binds 30S ribosomal subunits, but not 50S ribosomal subunits or 70S ribosomes.

Its subcellular location is the cytoplasm. In terms of biological role, one of several proteins that assist in the late maturation steps of the functional core of the 30S ribosomal subunit. Associates with free 30S ribosomal subunits (but not with 30S subunits that are part of 70S ribosomes or polysomes). Required for efficient processing of 16S rRNA. May interact with the 5'-terminal helix region of 16S rRNA. This is Ribosome-binding factor A from Desulfatibacillum aliphaticivorans.